A 395-amino-acid chain; its full sequence is Protein UNIFOLIATA (395 aa).

2 disordered regions span residues 147–170 (SQEG…GGGS) and 185–223 (QIRR…GERQ). Acidic residues predominate over residues 202–211 (EEGEEEEEDN). 3 DNA-binding regions span residues 224–228 (REHPF), 293–300 (NKPKMRHY), and 364–367 (YGPT).

This sequence belongs to the FLO/LFY family. As to expression, highly expressed in leaf, leaflet, inflorescence and lateral shoot primordia on the main shoot axis, and in floral organ and carpel primordia.

Its subcellular location is the nucleus. May regulate indeterminacy during leaf and flower development. The chain is Protein UNIFOLIATA (UNI) from Pisum sativum (Garden pea).